We begin with the raw amino-acid sequence, 139 residues long: Nucleoside diphosphate kinase (139 aa).

ATP-binding residues include Lys-10, Phe-58, Arg-86, Thr-92, Arg-103, and Asn-113. Residue His-116 is the Pros-phosphohistidine intermediate of the active site.

The protein belongs to the NDK family. Homotetramer. Requires Mg(2+) as cofactor.

The protein resides in the cytoplasm. The enzyme catalyses a 2'-deoxyribonucleoside 5'-diphosphate + ATP = a 2'-deoxyribonucleoside 5'-triphosphate + ADP. It catalyses the reaction a ribonucleoside 5'-diphosphate + ATP = a ribonucleoside 5'-triphosphate + ADP. Major role in the synthesis of nucleoside triphosphates other than ATP. The ATP gamma phosphate is transferred to the NDP beta phosphate via a ping-pong mechanism, using a phosphorylated active-site intermediate. The protein is Nucleoside diphosphate kinase of Phenylobacterium zucineum (strain HLK1).